We begin with the raw amino-acid sequence, 179 residues long: Replication restart protein DnaT (179 aa).

The disordered stretch occupies residues 156 to 179 (GGLPKRDVNTVSEPDSQIPPGFRG).

The protein belongs to the DnaT family. Homooligomerizes. Interacts with PriB. Component of the replication restart primosome. Primosome assembly occurs via a 'hand-off' mechanism. PriA binds to replication forks, subsequently PriB then DnaT bind; DnaT then displaces ssDNA to generate the helicase loading substrate.

In terms of biological role, involved in the restart of stalled replication forks, which reloads the replicative helicase on sites other than the origin of replication. Can function in multiple replication restart pathways. Displaces ssDNA from a PriB-ssDNA complex. Probably forms a spiral filament on ssDNA. The polypeptide is Replication restart protein DnaT (Shigella boydii serotype 18 (strain CDC 3083-94 / BS512)).